Here is a 200-residue protein sequence, read N- to C-terminus: Holliday junction branch migration complex subunit RuvA (200 aa).

The interval 1-63 (MYAYIKGTLS…EDAQLLYGFI (63 aa)) is domain I. Positions 64–142 (NEEEKEMFLS…ITEENSDDLL (79 aa)) are domain II. Residues 143 to 149 (QTQVNGN) form a flexible linker region. The segment at 150–200 (EQNQIISEALLALQALGYSKRELTKVEKSLNKHNVNSVDEAVKIGLQTLVS) is domain III.

This sequence belongs to the RuvA family. As to quaternary structure, homotetramer. Forms an RuvA(8)-RuvB(12)-Holliday junction (HJ) complex. HJ DNA is sandwiched between 2 RuvA tetramers; dsDNA enters through RuvA and exits via RuvB. An RuvB hexamer assembles on each DNA strand where it exits the tetramer. Each RuvB hexamer is contacted by two RuvA subunits (via domain III) on 2 adjacent RuvB subunits; this complex drives branch migration. In the full resolvosome a probable DNA-RuvA(4)-RuvB(12)-RuvC(2) complex forms which resolves the HJ.

Its subcellular location is the cytoplasm. Functionally, the RuvA-RuvB-RuvC complex processes Holliday junction (HJ) DNA during genetic recombination and DNA repair, while the RuvA-RuvB complex plays an important role in the rescue of blocked DNA replication forks via replication fork reversal (RFR). RuvA specifically binds to HJ cruciform DNA, conferring on it an open structure. The RuvB hexamer acts as an ATP-dependent pump, pulling dsDNA into and through the RuvAB complex. HJ branch migration allows RuvC to scan DNA until it finds its consensus sequence, where it cleaves and resolves the cruciform DNA. The polypeptide is Holliday junction branch migration complex subunit RuvA (Staphylococcus epidermidis (strain ATCC 35984 / DSM 28319 / BCRC 17069 / CCUG 31568 / BM 3577 / RP62A)).